A 138-amino-acid chain; its full sequence is UPF0201 protein PYRAB09730 (138 aa).

Belongs to the UPF0201 family.

This chain is UPF0201 protein PYRAB09730, found in Pyrococcus abyssi (strain GE5 / Orsay).